The chain runs to 64 residues: Small, acid-soluble spore protein beta (64 aa).

The protein belongs to the alpha/beta-type SASP family.

In terms of biological role, SASP are bound to spore DNA. They are double-stranded DNA-binding proteins that cause DNA to change to an a-like conformation. They protect the DNA backbone from chemical and enzymatic cleavage and are thus involved in dormant spore's high resistance to UV light. The polypeptide is Small, acid-soluble spore protein beta (Paraclostridium bifermentans (Clostridium bifermentans)).